Reading from the N-terminus, the 537-residue chain is Putative cysteine ligase BshC (537 aa).

Positions 422 to 450 (IEKVEGMIEQQRRLNKDLLDEVAGNQNNI) form a coiled coil.

The protein belongs to the BshC family.

Functionally, involved in bacillithiol (BSH) biosynthesis. May catalyze the last step of the pathway, the addition of cysteine to glucosamine malate (GlcN-Mal) to generate BSH. The chain is Putative cysteine ligase BshC from Staphylococcus aureus (strain Mu3 / ATCC 700698).